The following is a 328-amino-acid chain: DNA-directed RNA polymerase subunit alpha (328 aa).

Residues 1–231 are alpha N-terminal domain (alpha-NTD); the sequence is MIYQMQMPER…EHVSLFANFS (231 aa). The segment at 252 to 328 is alpha C-terminal domain (alpha-CTD); the sequence is MRKLLQTRIE…MDITKYQMKS (77 aa).

Belongs to the RNA polymerase alpha chain family. In terms of assembly, homodimer. The RNAP catalytic core consists of 2 alpha, 1 beta, 1 beta' and 1 omega subunit. When a sigma factor is associated with the core the holoenzyme is formed, which can initiate transcription.

It carries out the reaction RNA(n) + a ribonucleoside 5'-triphosphate = RNA(n+1) + diphosphate. Functionally, DNA-dependent RNA polymerase catalyzes the transcription of DNA into RNA using the four ribonucleoside triphosphates as substrates. The polypeptide is DNA-directed RNA polymerase subunit alpha (Prosthecochloris aestuarii (strain DSM 271 / SK 413)).